The following is a 183-amino-acid chain: MVMNTDSLALIKNSIKTIPNYPKEGILFRDVTSLLEDPQAYKLTIGLLVEHYKDQGFTKVVGTEARGFLFGAPLALELGIGFVPVRKPGKLPRETISESYELEYGHDVLEIHVDAINADDKVLVIDDLLATGGTIEATVKLIRKLGGSVNDAAFVISLPDLGGEERLKAMDLKLISLCEFEGE.

It belongs to the purine/pyrimidine phosphoribosyltransferase family. In terms of assembly, homodimer.

The protein localises to the cytoplasm. It catalyses the reaction AMP + diphosphate = 5-phospho-alpha-D-ribose 1-diphosphate + adenine. It participates in purine metabolism; AMP biosynthesis via salvage pathway; AMP from adenine: step 1/1. Functionally, catalyzes a salvage reaction resulting in the formation of AMP, that is energically less costly than de novo synthesis. This Shewanella pealeana (strain ATCC 700345 / ANG-SQ1) protein is Adenine phosphoribosyltransferase.